A 56-amino-acid chain; its full sequence is Conotoxin reg3.9 (56 aa).

Residues L1–L8 form the signal peptide. The segment at L1 to R22 is disordered. A propeptide spanning residues P9 to G40 is cleaved from the precursor. Intrachain disulfides connect C41–C55, C42–C53, and C47–C56.

This sequence belongs to the conotoxin M superfamily. In terms of tissue distribution, expressed by the venom duct.

Its subcellular location is the secreted. The sequence is that of Conotoxin reg3.9 from Conus regius (Crown cone).